The following is a 144-amino-acid chain: Maximins 3/H5 (144 aa).

The first 18 residues, 1 to 18 (MNFKYIFAVSFLIASAYA), serve as a signal peptide directing secretion. Propeptides lie at residues 19–43 (RSVQNDEQSLSQRDVLEEESLREIR) and 74–123 (TAEE…KEKR). The residue at position 143 (L143) is a Leucine amide.

Belongs to the bombinin family. In terms of tissue distribution, expressed by the skin glands.

The protein localises to the secreted. Its function is as follows. Maximin-3 shows antibacterial activity against both Gram-positive and Gram-negative bacteria. It also shows antimicrobial activity against the fungus C.albicans, but not against A.flavus nor P.uticale. It has little hemolytic activity. It possess a significant cytotoxicity against tumor cell lines. It possess a significant anti-HIV activity. It shows high spermicidal activity. In terms of biological role, maximin-H5 shows antibacterial activity only against the Gram-positive bacteria S.aureus. The other bacterial and fungal strains tested were resistant to it. The presence of metal ions, like Zn(2+) and Mg(2+), did not increase its antimicrobial potency. Does not show hemolytic activity (in a concentration up to 80 uM). In Bombina maxima (Giant fire-bellied toad), this protein is Maximins 3/H5.